Consider the following 420-residue polypeptide: Serine hydroxymethyltransferase (420 aa).

(6S)-5,6,7,8-tetrahydrofolate-binding positions include Leu-121 and 125-127; that span reads GHL. The residue at position 229 (Lys-229) is an N6-(pyridoxal phosphate)lysine.

Belongs to the SHMT family. As to quaternary structure, homodimer. Pyridoxal 5'-phosphate is required as a cofactor.

Its subcellular location is the cytoplasm. It catalyses the reaction (6R)-5,10-methylene-5,6,7,8-tetrahydrofolate + glycine + H2O = (6S)-5,6,7,8-tetrahydrofolate + L-serine. It participates in one-carbon metabolism; tetrahydrofolate interconversion. Its pathway is amino-acid biosynthesis; glycine biosynthesis; glycine from L-serine: step 1/1. Its function is as follows. Catalyzes the reversible interconversion of serine and glycine with tetrahydrofolate (THF) serving as the one-carbon carrier. This reaction serves as the major source of one-carbon groups required for the biosynthesis of purines, thymidylate, methionine, and other important biomolecules. Also exhibits THF-independent aldolase activity toward beta-hydroxyamino acids, producing glycine and aldehydes, via a retro-aldol mechanism. The protein is Serine hydroxymethyltransferase of Aggregatibacter actinomycetemcomitans (Actinobacillus actinomycetemcomitans).